The primary structure comprises 237 residues: Golgi anti-apoptotic protein (237 aa).

The Cytoplasmic portion of the chain corresponds to 1–37 (MAMPSLSACSSIEDDFNYGSSVASASVHIRMAFLRKV). Residues 38 to 58 (YGILCLQFLLTTATTAVFLYF) form a helical membrane-spanning segment. Residues 59–67 (DCMRTFIQG) lie on the Lumenal side of the membrane. The chain crosses the membrane as a helical span at residues 68 to 88 (SPVLILASMFGSIGLIFALTL). Over 89–94 (HRHKHP) the chain is Cytoplasmic. Residues 95-115 (LNLYLLCGFTLSESLTLASVV) form a helical membrane-spanning segment. A topological domain (lumenal) is located at residue Thr-116. The helical transmembrane segment at 117-137 (FYDVHVVMQAFMLTTAAFLAL) threads the bilayer. At 138–151 (TTYTLQSKRDFSKL) the chain is on the cytoplasmic side. A helical membrane pass occupies residues 152–172 (GAGLFAALWILILSGLLGIFV). Topologically, residues 173–174 (QN) are lumenal. The chain crosses the membrane as a helical span at residues 175–195 (ETVKLVLSAFGALVFCGFIIY). Residues 196–209 (DTHSLIHKLSPEEY) lie on the Cytoplasmic side of the membrane. Positions 210 to 230 (VLASINLYLDIINLFLHLLQL) form an intramembrane region, helical. Residues 231–237 (LEVSNKK) are Cytoplasmic-facing.

This sequence belongs to the BI1 family. LFG subfamily.

Its subcellular location is the host Golgi apparatus membrane. Functionally, may affect virulence through inhibition of apoptosis. In Vaccinia virus (strain LC16m0) (VACV), this protein is Golgi anti-apoptotic protein (L6).